We begin with the raw amino-acid sequence, 315 residues long: Methionyl-tRNA formyltransferase (315 aa).

Position 113–116 (113–116) interacts with (6S)-5,6,7,8-tetrahydrofolate; that stretch reads SLLP.

Belongs to the Fmt family.

The catalysed reaction is L-methionyl-tRNA(fMet) + (6R)-10-formyltetrahydrofolate = N-formyl-L-methionyl-tRNA(fMet) + (6S)-5,6,7,8-tetrahydrofolate + H(+). Functionally, attaches a formyl group to the free amino group of methionyl-tRNA(fMet). The formyl group appears to play a dual role in the initiator identity of N-formylmethionyl-tRNA by promoting its recognition by IF2 and preventing the misappropriation of this tRNA by the elongation apparatus. The chain is Methionyl-tRNA formyltransferase from Klebsiella pneumoniae (strain 342).